The chain runs to 160 residues: Transcription elongation factor GreA (160 aa).

Residues 49–75 adopt a coiled-coil conformation; that stretch reads SEYDEAKNDQAFTEGKILQLENKLKNA.

This sequence belongs to the GreA/GreB family.

Its function is as follows. Necessary for efficient RNA polymerase transcription elongation past template-encoded arresting sites. The arresting sites in DNA have the property of trapping a certain fraction of elongating RNA polymerases that pass through, resulting in locked ternary complexes. Cleavage of the nascent transcript by cleavage factors such as GreA or GreB allows the resumption of elongation from the new 3'terminus. GreA releases sequences of 2 to 3 nucleotides. In Clostridium botulinum (strain Eklund 17B / Type B), this protein is Transcription elongation factor GreA.